Here is a 471-residue protein sequence, read N- to C-terminus: Putative multidrug resistance protein MdtD (471 aa).

Residues 1 to 11 lie on the Periplasmic side of the membrane; that stretch reads MTDLPDSTRWQ. A helical membrane pass occupies residues 12-32; that stretch reads LWIVAFGFFMQSLDTTIVNTA. Topologically, residues 33-48 are cytoplasmic; the sequence is LPSMAQSLGESPLHMH. The helical transmembrane segment at 49-69 threads the bilayer; sequence MVIVSYVLTVAVMLPASGWLA. Over 70–76 the chain is Periplasmic; the sequence is DKVGVRN. Residues 77-97 traverse the membrane as a helical segment; the sequence is IFFTAIVLFTLGSLFCALSGT. Residues 98–101 lie on the Cytoplasmic side of the membrane; that stretch reads LNEL. Residues 102 to 124 form a helical membrane-spanning segment; sequence LLARALQGVGGAMMVPVGRLTVM. Topologically, residues 125-137 are periplasmic; that stretch reads KIVPREQYMAAMT. The chain crosses the membrane as a helical span at residues 138-158; the sequence is FVTLPGQVGPLLGPALGGLLV. At 159-164 the chain is on the cytoplasmic side; that stretch reads EYASWH. A helical transmembrane segment spans residues 165–185; it reads WIFLINIPVGIIGAIATLLLM. Residues 186–196 are Periplasmic-facing; that stretch reads PNYTMQTRRFD. A helical membrane pass occupies residues 197 to 217; sequence LSGFLLLAVGMAVLTLALDGS. Residues 218–224 are Cytoplasmic-facing; sequence KGTGLSP. Residues 225–245 traverse the membrane as a helical segment; it reads LTIAGLVAVGVVALVLYLLHA. The Periplasmic segment spans residues 246-262; it reads RNNNRALFSLKLFRTRT. The chain crosses the membrane as a helical span at residues 263-283; that stretch reads FSLGLAGSFAGRIGSGMLPFM. Topologically, residues 284–285 are cytoplasmic; it reads TP. The chain crosses the membrane as a helical span at residues 286-306; sequence VFLQIGLGFSPFHAGLMMIPM. The Periplasmic segment spans residues 307–341; it reads VLGSMGMKRIVVQVVNRFGYRRVLVATTLGLSLVT. The chain crosses the membrane as a helical span at residues 342-362; sequence LLFMTTALLGWYYVLPFVLFL. The Cytoplasmic segment spans residues 363–395; that stretch reads QGMVNSTRFSSMNTLTLKDLPDNLASSGNSLLS. A helical membrane pass occupies residues 396-416; that stretch reads MIMQLSMSIGVTIAGLLLGLF. Residues 417–430 are Periplasmic-facing; sequence GSQHVSVDSGTTQT. The chain crosses the membrane as a helical span at residues 431-451; it reads VFMYTWLSMALIIALPAFIFA. Residues 452–471 lie on the Cytoplasmic side of the membrane; the sequence is RVPNDTHQNVAISRRKRSAQ.

Belongs to the major facilitator superfamily. TCR/Tet family.

Its subcellular location is the cell inner membrane. This Escherichia coli (strain K12 / MC4100 / BW2952) protein is Putative multidrug resistance protein MdtD.